Here is a 383-residue protein sequence, read N- to C-terminus: ATP phosphoribosyltransferase regulatory subunit (383 aa).

The protein belongs to the class-II aminoacyl-tRNA synthetase family. HisZ subfamily. In terms of assembly, heteromultimer composed of HisG and HisZ subunits.

Its subcellular location is the cytoplasm. It functions in the pathway amino-acid biosynthesis; L-histidine biosynthesis; L-histidine from 5-phospho-alpha-D-ribose 1-diphosphate: step 1/9. Its function is as follows. Required for the first step of histidine biosynthesis. May allow the feedback regulation of ATP phosphoribosyltransferase activity by histidine. This chain is ATP phosphoribosyltransferase regulatory subunit, found in Desulfitobacterium hafniense (strain Y51).